Consider the following 116-residue polypeptide: Excisionase (116 aa).

In terms of biological role, part of the excision complex necessary for the excision of prophage from the host genome by site-specific recombination at the att site. The polypeptide is Excisionase (xis) (Salmonella phage P22 (Bacteriophage P22)).